The primary structure comprises 39 residues: Photosystem II reaction center protein Y (39 aa).

A helical membrane pass occupies residues 7–25; that stretch reads VLVVLLPVLLAGGWALKNI.

The protein belongs to the PsbY family. PSII is composed of 1 copy each of membrane proteins PsbA, PsbB, PsbC, PsbD, PsbE, PsbF, PsbH, PsbI, PsbJ, PsbK, PsbL, PsbM, PsbT, PsbX, PsbY, PsbZ, Psb30/Ycf12, peripheral proteins PsbO, CyanoQ (PsbQ), PsbU, PsbV and a large number of cofactors. It forms dimeric complexes.

The protein localises to the cellular thylakoid membrane. In terms of biological role, loosely associated component of the core of photosystem II (PSII), it is not always seen in crystals. PSII is a light-driven water plastoquinone oxidoreductase, using light energy to abstract electrons from H(2)O, generating a proton gradient subsequently used for ATP formation. The sequence is that of Photosystem II reaction center protein Y from Cyanothece sp. (strain PCC 7425 / ATCC 29141).